The chain runs to 653 residues: DUF21 domain-containing protein At1g55930, chloroplastic (653 aa).

A chloroplast-targeting transit peptide spans 1-72; it reads MELDLSVLGR…DFSHRCQFVV (72 aa). 5 helical membrane-spanning segments follow: residues 103–123, 157–177, 208–228, 234–254, and 280–300; these read GIVL…KVLA, GLIL…ETSI, FLTT…ALVT, IFGE…ILLL, and WLSL…MGIL. Residues 149-335 enclose the CNNM transmembrane domain; the sequence is VLKVLREQGL…ELSGAIEEEE (187 aa). CBS domains follow at residues 354-415 and 421-479; these read MTPL…LLES and MAHK…IFDE.

The protein localises to the plastid. It is found in the chloroplast membrane. In Arabidopsis thaliana (Mouse-ear cress), this protein is DUF21 domain-containing protein At1g55930, chloroplastic (CBSDUFCH2).